We begin with the raw amino-acid sequence, 753 residues long: MSTRTPLPTVNERDTENHTSHGDGRQEVTSRTSRSGARCRNSIASCADEQPHIGNYRLLKTIGKGNFAKVKLARHILTGREVAIKIIDKTQLNPTSLQKLFREVRIMKILNHPNIVKLFEVIETEKTLYLIMEYASGGEVFDYLVAHGRMKEKEARSKFRQIVSAVQYCHQKRIVHRDLKAENLLLDADMNIKIADFGFSNEFTVGGKLDTFCGSPPYAAPELFQGKKYDGPEVDVWSLGVILYTLVSGSLPFDGQNLKELRERVLRGKYRIPFYMSTDCENLLKRFLVLNPIKRGTLEQIMKDRWINAGHEEDELKPFVEPELDISDQKRIDIMVGMGYSQEEIQESLSKMKYDEITATYLLLGRKSSELDASDSSSSSNLSLAKVRPSSDLNNSTGQSPHHKVQRSVSSSQKQRRYSDHAGPAIPSVVAYPKRSQTSTADSDLKEDGISSRKSSGSAVGGKGIAPASPMLGNASNPNKADIPERKKSSTVPSSNTASGGMTRRNTYVCSERTTADRHSVIQNGKENSTIPDQRTPVASTHSISSAATPDRIRFPRGTASRSTFHGQPRERRTATYNGPPASPSLSHEATPLSQTRSRGSTNLFSKLTSKLTRRNMSFRFIKRLPTEYERNGRYEGSSRNVSAEQKDENKEAKPRSLRFTWSMKTTSSMDPGDMMREIRKVLDANNCDYEQRERFLLFCVHGDGHAENLVQWEMEVCKLPRLSLNGVRFKRISGTSIAFKNIASKIANELKL.

Residues 1 to 36 (MSTRTPLPTVNERDTENHTSHGDGRQEVTSRTSRSG) form a disordered region. Basic and acidic residues predominate over residues 11-28 (NERDTENHTSHGDGRQEV). At serine 42 the chain carries Phosphoserine. Residues 56 to 307 (YRLLKTIGKG…LEQIMKDRWI (252 aa)) form the Protein kinase domain. ATP-binding positions include 62-70 (IGKGNFAKV) and lysine 85. Aspartate 178 (proton acceptor) is an active-site residue. At threonine 211 the chain carries Phosphothreonine; by LKB1. In terms of domain architecture, UBA spans 326–365 (ISDQKRIDIMVGMGYSQEEIQESLSKMKYDEITATYLLLG). Phosphoserine occurs at positions 368, 374, 376, 380, 383, 384, 400, 407, 419, and 469. Positions 370-600 (ELDASDSSSS…TPLSQTRSRG (231 aa)) are disordered. Residues 374 to 385 (SDSSSSSNLSLA) are compositionally biased toward low complexity. A compositionally biased stretch (polar residues) spans 391–400 (SDLNNSTGQS). Polar residues-rich tracts occupy residues 490–513 (STVPSSNTASGGMTRRNTYVCSER) and 521–548 (VIQNGKENSTIPDQRTPVASTHSISSAA). Phosphoserine is present on residues serine 540 and serine 543. At threonine 549 the chain carries Phosphothreonine. The residue at position 564 (threonine 564) is a Phosphothreonine; by PKC/PRKCZ. Phosphoserine is present on residues serine 583, serine 598, serine 601, and serine 643. Residues 584–600 (PSLSHEATPLSQTRSRG) are compositionally biased toward polar residues. Residues 632-655 (NGRYEGSSRNVSAEQKDENKEAKP) are disordered. Residues 645-655 (EQKDENKEAKP) are compositionally biased toward basic and acidic residues. The region spanning 704-753 (DGHAENLVQWEMEVCKLPRLSLNGVRFKRISGTSIAFKNIASKIANELKL) is the KA1 domain.

Belongs to the protein kinase superfamily. CAMK Ser/Thr protein kinase family. SNF1 subfamily. Interacts with MAPT/TAU. Interacts with DLG5 (via coiled-coil domain). Interacts with STK3/MST2 and STK4/MST1 in the presence of DLG5. Interacts with YWHAB, YWHAG, YWHAQ and YWHAZ. Interacts with PKP2 (via N-terminus). Interacts with CDC25C. Interacts with KSR1. In terms of processing, phosphorylated at Thr-211 by STK11/LKB1 in complex with STE20-related adapter-alpha (STRADA) pseudo kinase and CAB39. Phosphorylation at Thr-564 by PRKCZ/aPKC inhibits the kinase activity. As to expression, ubiquitous.

It is found in the cell membrane. It localises to the cell projection. The protein localises to the dendrite. Its subcellular location is the cytoplasm. The enzyme catalyses L-seryl-[protein] + ATP = O-phospho-L-seryl-[protein] + ADP + H(+). The catalysed reaction is L-threonyl-[protein] + ATP = O-phospho-L-threonyl-[protein] + ADP + H(+). With respect to regulation, activated by phosphorylation on Thr-211. Inhibited by phosphorylation on Thr-564. Functionally, serine/threonine-protein kinase. Involved in the specific phosphorylation of microtubule-associated proteins for MAP2 and MAP4. Phosphorylates the microtubule-associated protein MAPT/TAU. Phosphorylates CDC25C on 'Ser-216'. Regulates localization and activity of some histone deacetylases by mediating phosphorylation of HDAC7, promoting subsequent interaction between HDAC7 and 14-3-3 and export from the nucleus. Regulates localization and activity of MITF by mediating its phosphorylation, promoting subsequent interaction between MITF and 14-3-3 and retention in the cytosol. Negatively regulates the Hippo signaling pathway and antagonizes the phosphorylation of LATS1. Cooperates with DLG5 to inhibit the kinase activity of STK3/MST2 toward LATS1. Phosphorylates PKP2 and KSR1. This Homo sapiens (Human) protein is MAP/microtubule affinity-regulating kinase 3 (MARK3).